Here is a 326-residue protein sequence, read N- to C-terminus: MKILGIESSCDETAASVVEDGVNILSNRISSQIDIHSRYGGVVPEVASRQHLLSILPVIKDALEEARTGLDEISAIAITNGPGLAGSLIVGVNAAKAIAAARRIPLVAVNHLHGHIYANWLFGKIPEFPCLCLTVSGGHTDLVLMSGHGQYQLLGRTRDDAAGEAFDKAARILGLSYPGGPAIDRASQDGQAVLDLPRSWIPGSHDFSFSGLKTALLRLVESGEVCSVNDAAASFQKAVVDVLVTKTINCAQEYNVKQILLAGGVAANNLLRKQLSEKSSLPVSIPPMGLCTDNAAVIASCGYFRFISGKQDGLDMDVLPALSVTS.

Fe cation is bound by residues H111 and H115. Substrate-binding positions include 134–138, D167, G180, D184, and N268; that span reads TVSGG. D293 provides a ligand contact to Fe cation.

It belongs to the KAE1 / TsaD family. Fe(2+) serves as cofactor.

Its subcellular location is the cytoplasm. It carries out the reaction L-threonylcarbamoyladenylate + adenosine(37) in tRNA = N(6)-L-threonylcarbamoyladenosine(37) in tRNA + AMP + H(+). In terms of biological role, required for the formation of a threonylcarbamoyl group on adenosine at position 37 (t(6)A37) in tRNAs that read codons beginning with adenine. Is involved in the transfer of the threonylcarbamoyl moiety of threonylcarbamoyl-AMP (TC-AMP) to the N6 group of A37, together with TsaE and TsaB. TsaD likely plays a direct catalytic role in this reaction. The sequence is that of tRNA N6-adenosine threonylcarbamoyltransferase from Dehalococcoides mccartyi (strain ATCC BAA-2100 / JCM 16839 / KCTC 5957 / BAV1).